Consider the following 443-residue polypeptide: Probable D-serine dehydratase (443 aa).

The residue at position 118 (Lys-118) is an N6-(pyridoxal phosphate)lysine.

Belongs to the serine/threonine dehydratase family. DsdA subfamily. It depends on pyridoxal 5'-phosphate as a cofactor.

The catalysed reaction is D-serine = pyruvate + NH4(+). This is Probable D-serine dehydratase from Vibrio campbellii (strain ATCC BAA-1116).